A 124-amino-acid chain; its full sequence is uncharacterized protein (124 aa).

It belongs to the asfivirus H124R family.

The protein resides in the virion. This is an uncharacterized protein from Ornithodoros (relapsing fever ticks).